The primary structure comprises 505 residues: Deoxyguanosinetriphosphate triphosphohydrolase (505 aa).

The 208-residue stretch at 66 to 273 (RLTHSMEVQQ…MEAADDISYC (208 aa)) folds into the HD domain.

Belongs to the dGTPase family. Type 1 subfamily. As to quaternary structure, homotetramer. Mg(2+) serves as cofactor.

It carries out the reaction dGTP + H2O = 2'-deoxyguanosine + triphosphate + H(+). Its function is as follows. dGTPase preferentially hydrolyzes dGTP over the other canonical NTPs. The chain is Deoxyguanosinetriphosphate triphosphohydrolase from Escherichia coli O157:H7.